The primary structure comprises 157 residues: 3-dehydroquinate dehydratase (157 aa).

Residue Y24 is the Proton acceptor of the active site. Substrate-binding residues include N75, H81, and D88. The active-site Proton donor is H101. Residues 102-103 and R112 each bind substrate; that span reads LS.

It belongs to the type-II 3-dehydroquinase family. In terms of assembly, homododecamer.

The catalysed reaction is 3-dehydroquinate = 3-dehydroshikimate + H2O. It functions in the pathway metabolic intermediate biosynthesis; chorismate biosynthesis; chorismate from D-erythrose 4-phosphate and phosphoenolpyruvate: step 3/7. Its function is as follows. Catalyzes a trans-dehydration via an enolate intermediate. This is 3-dehydroquinate dehydratase from Brucella canis (strain ATCC 23365 / NCTC 10854 / RM-666).